The primary structure comprises 186 residues: Ribosome-recycling factor (186 aa).

The tract at residues 135–164 (DGMDDLKKAEKDGEIGQDESRAQSERVQKM) is disordered.

The protein belongs to the RRF family.

The protein localises to the cytoplasm. In terms of biological role, responsible for the release of ribosomes from messenger RNA at the termination of protein biosynthesis. May increase the efficiency of translation by recycling ribosomes from one round of translation to another. This Rhizobium meliloti (strain 1021) (Ensifer meliloti) protein is Ribosome-recycling factor.